Here is a 1391-residue protein sequence, read N- to C-terminus: DNA-directed RNA polymerase subunit beta' (1391 aa).

Positions 72, 74, 87, and 90 each coordinate Zn(2+). Residues Asp-462, Asp-464, and Asp-466 each coordinate Mg(2+). Zn(2+)-binding residues include Cys-816, Cys-890, Cys-897, and Cys-900.

This sequence belongs to the RNA polymerase beta' chain family. In terms of assembly, the RNAP catalytic core consists of 2 alpha, 1 beta, 1 beta' and 1 omega subunit. When a sigma factor is associated with the core the holoenzyme is formed, which can initiate transcription. Requires Mg(2+) as cofactor. It depends on Zn(2+) as a cofactor.

It catalyses the reaction RNA(n) + a ribonucleoside 5'-triphosphate = RNA(n+1) + diphosphate. DNA-dependent RNA polymerase catalyzes the transcription of DNA into RNA using the four ribonucleoside triphosphates as substrates. This is DNA-directed RNA polymerase subunit beta' from Neisseria gonorrhoeae (strain NCCP11945).